The primary structure comprises 164 residues: Endoribonuclease YbeY (164 aa).

Zn(2+) is bound by residues histidine 132, histidine 136, and histidine 142.

It belongs to the endoribonuclease YbeY family. Zn(2+) serves as cofactor.

It is found in the cytoplasm. In terms of biological role, single strand-specific metallo-endoribonuclease involved in late-stage 70S ribosome quality control and in maturation of the 3' terminus of the 16S rRNA. The protein is Endoribonuclease YbeY of Clostridium kluyveri (strain NBRC 12016).